The following is a 334-amino-acid chain: Probable N5-carboxyaminoimidazole ribonucleotide mutase (334 aa).

Residues S11, D14, and R41 each coordinate substrate.

This sequence belongs to the AIR carboxylase family. Class I subfamily.

It carries out the reaction 5-carboxyamino-1-(5-phospho-D-ribosyl)imidazole + H(+) = 5-amino-1-(5-phospho-D-ribosyl)imidazole-4-carboxylate. The protein operates within purine metabolism; IMP biosynthesis via de novo pathway; 5-amino-1-(5-phospho-D-ribosyl)imidazole-4-carboxylate from 5-amino-1-(5-phospho-D-ribosyl)imidazole (N5-CAIR route): step 2/2. In terms of biological role, catalyzes the conversion of N5-carboxyaminoimidazole ribonucleotide (N5-CAIR) to 4-carboxy-5-aminoimidazole ribonucleotide (CAIR). The polypeptide is Probable N5-carboxyaminoimidazole ribonucleotide mutase (Methanothermobacter thermautotrophicus (strain ATCC 29096 / DSM 1053 / JCM 10044 / NBRC 100330 / Delta H) (Methanobacterium thermoautotrophicum)).